Consider the following 140-residue polypeptide: Histone H3-like protein (140 aa).

The disordered stretch occupies residues 1–36; that stretch reads MSRTKQTASKALGGKAPRKGISAKSIPSSGCSPAMP. At Lys5 the chain carries N6,N6,N6-trimethyllysine; alternate. The residue at position 5 (Lys5) is an N6,N6-dimethyllysine; alternate. Lys5 and Lys10 each carry N6-methyllysine; alternate. N6-acetyllysine; alternate is present on residues Lys10, Lys15, Lys19, and Lys24. Lys15 carries the N6,N6-dimethyllysine; alternate modification. N6-methyllysine; alternate occurs at positions 19 and 24. N6-acetyllysine occurs at positions 56 and 64.

This sequence belongs to the histone H3 family. In terms of assembly, the nucleosome is a histone octamer containing two molecules each of H2A, H2B, H3 and H4 assembled in one H3-H4 heterotetramer and two H2A-H2B heterodimers. The octamer wraps approximately 147 bp of DNA. Mono-, di- and trimethylated to form H3K4me1/2/3. H3K4me activates gene expression by regulating transcription elongation and plays a role in telomere length maintenance. H3K4me enrichment correlates with transcription levels, and occurs in a 5' to 3' gradient with H3K4me3 enrichment at the 5'-end of genes, shifting to H3K4me2 and then H3K4me1. Post-translationally, acetylation of histone H3 leads to transcriptional activation.

It is found in the nucleus. Its subcellular location is the chromosome. In terms of biological role, core component of nucleosome. Nucleosomes wrap and compact DNA into chromatin, limiting DNA accessibility to the cellular machineries which require DNA as a template. Histones thereby play a central role in transcription regulation, DNA repair, DNA replication and chromosomal stability. DNA accessibility is regulated via a complex set of post-translational modifications of histones, also called histone code, and nucleosome remodeling. The polypeptide is Histone H3-like protein (Encephalitozoon cuniculi (strain GB-M1) (Microsporidian parasite)).